We begin with the raw amino-acid sequence, 220 residues long: MSIESSSSESSPNADALHLNSSEVRVLGCLIEKQATNPETYPLTLNALVLACNQKTSRDPVMSLTPGQVGQSLRALEGRGLTRLVMGSRADRWEHRVDKAVELVPAQVILTGLLLLRGPQTVSELLTRSHRMHDFEDSEQLIHQLERLIARGLAMLAPRQSGQREDRYTHLLGDPDDLQELLAARQHAPERNAANPAASQRFDELEARVAALEERLARLE.

It belongs to the UPF0502 family.

The chain is UPF0502 protein PSPPH_2577 from Pseudomonas savastanoi pv. phaseolicola (strain 1448A / Race 6) (Pseudomonas syringae pv. phaseolicola (strain 1448A / Race 6)).